The sequence spans 114 residues: uncharacterized protein (114 aa).

Gly2 is lipidated: N-myristoyl glycine; by host. Transmembrane regions (helical) follow at residues 11 to 31 (FGLILVGAIIFTASYLWKDLL) and 44 to 64 (GLMWRSIYTILVTVILVLVAI). Positions 73–114 (VNKDSKDPKDKSIEFDDSPIRDGSSGTPDNSNEPTDLSVETS) are disordered. Residues 75 to 92 (KDSKDPKDKSIEFDDSPI) show a composition bias toward basic and acidic residues. The span at 96 to 114 (SSGTPDNSNEPTDLSVETS) shows a compositional bias: polar residues.

It localises to the membrane. This is an uncharacterized protein from Acanthamoeba polyphaga (Amoeba).